We begin with the raw amino-acid sequence, 345 residues long: Fe(3+) ions import ATP-binding protein FbpC (345 aa).

The ABC transporter domain occupies leucine 3 to leucine 233. Glycine 35–serine 42 contributes to the ATP binding site.

This sequence belongs to the ABC transporter superfamily. Fe(3+) ion importer (TC 3.A.1.10) family. In terms of assembly, the complex is composed of two ATP-binding proteins (FbpC), two transmembrane proteins (FbpB) and a solute-binding protein (FbpA).

It is found in the cell membrane. It catalyses the reaction Fe(3+)(out) + ATP + H2O = Fe(3+)(in) + ADP + phosphate + H(+). Its function is as follows. Part of the ABC transporter complex FbpABC involved in Fe(3+) ions import. Responsible for energy coupling to the transport system. The polypeptide is Fe(3+) ions import ATP-binding protein FbpC (Streptomyces avermitilis (strain ATCC 31267 / DSM 46492 / JCM 5070 / NBRC 14893 / NCIMB 12804 / NRRL 8165 / MA-4680)).